We begin with the raw amino-acid sequence, 135 residues long: Small ribosomal subunit protein bS16m (135 aa).

Residues 1–34 (MVQLTTIFCKAYHGGHLTIRLALGGCTNRPFYRI) constitute a mitochondrion transit peptide.

It belongs to the bacterial ribosomal protein bS16 family. As to quaternary structure, component of the mitochondrial ribosome small subunit (28S) which comprises a 12S rRNA and about 30 distinct proteins.

It is found in the mitochondrion. This chain is Small ribosomal subunit protein bS16m (Mrps16), found in Mus musculus (Mouse).